The following is a 373-amino-acid chain: Zinc finger protein CONSTANS (373 aa).

The segment at 15–57 (NRARPCDTCRSNACTVYCHADSAYLCMSCDAQVHSANRVASRH) adopts a B box-type 1; atypical zinc-finger fold. The Zn(2+) site is built by C20, C23, C43, H48, C63, C66, C86, and H91. The B box-type 2; atypical zinc finger occupies 58–108 (KRVRVCESCERAPAAFLCEADDASLCTACDSEVHSANPLARRHQRVPILPI). Over residues 109–120 (SGNSFSSMTTTH) the composition is skewed to polar residues. The tract at residues 109–130 (SGNSFSSMTTTHHQSEKTMTDP) is disordered. Positions 121 to 130 (HQSEKTMTDP) are enriched in basic and acidic residues. The CCT domain occupies 306–348 (REARVLRYREKRKTRKFEKTIRYASRKAYAEIRPRVNGRFAKR).

This sequence belongs to the CONSTANS family. As to quaternary structure, interacts with ADO3, SPA1, SPA2, SPA3 and SPA4. Interacts with MRG1 and MRG2 (via MRG domain). Interacts (via B-box) with MIP1A. Interacts with AS1 to form a functional complex regulating FT expression. Interacts with NFYC9. Component of a red light-dependent nuclear complex made of PHL, PHYB and CO. Interacts directly with PHL in the presence of PHYB. In terms of tissue distribution, expressed in leaves, shoots and shoot apical meristem. Detected in the vascular tissue of the hypocotyl, the cotyledons and the leaves. Restricted to the protoxylem and phloem in young inflorescence stems and to the phloem only in older inflorescences. Also detected in the vascular tissue of the root.

The protein localises to the nucleus. Functionally, transcription factor that acts in the long day flowering pathway and may mediate between the circadian clock and the control of flowering. Plays a role in the regulation of flowering time by acting on 'SUPPRESSOR OF OVEREXPRESSION OF CO1', 'TERMINAL FLOWER 1' and 'FLOWERING LOCUS T'. Also regulates P5CS2 and ACS10 (involved in proline and ethylene biosynthesis, respectively). Regulates the expression of NAKR1 by binding to the 5'-TGTG(N2-3)ATG-3' motif. This chain is Zinc finger protein CONSTANS, found in Arabidopsis thaliana (Mouse-ear cress).